An 81-amino-acid polypeptide reads, in one-letter code: MTDQHLEDLIVHIVTPLVDHPDDIRVIREETDQKIALRLSVHKSDTGKVIGKQGRTAKAIRTAVFAAGVQSSKKVQFEIFD.

A KH domain is found at 34–81; it reads KIALRLSVHKSDTGKVIGKQGRTAKAIRTAVFAAGVQSSKKVQFEIFD.

Belongs to the KhpA RNA-binding protein family. In terms of assembly, forms a complex with KhpB.

The protein localises to the cytoplasm. A probable RNA chaperone. Forms a complex with KhpB which binds to cellular RNA and controls its expression. Plays a role in peptidoglycan (PG) homeostasis and cell length regulation. The protein is RNA-binding protein KhpA of Bacillus subtilis (strain 168).